Reading from the N-terminus, the 285-residue chain is Protoheme IX farnesyltransferase (285 aa).

A run of 9 helical transmembrane segments spans residues 13 to 33 (LGKLGVVSLLDLAAVAGAFLA), 40 to 60 (LLPIIPMFIGGTLASMGAMII), 89 to 109 (EAIIVGSLLAILGTALGFIDN), 110 to 130 (ILTAFFIALGVVIYIFVYTIL), 137 to 157 (LNIVIGGFAGSAAAWAGYTSL), 165 to 185 (GFLLGFLIFMWTPGHFWSLAL), 194 to 214 (AHYPMLPAVVGITTSARAIAI), 218 to 238 (LMIPIVLLLGYYINLIALIAF), and 265 to 285 (FIFSNIYLMLILLIMIIVKLI).

Belongs to the UbiA prenyltransferase family. Protoheme IX farnesyltransferase subfamily.

Its subcellular location is the cell membrane. It carries out the reaction heme b + (2E,6E)-farnesyl diphosphate + H2O = Fe(II)-heme o + diphosphate. Its pathway is porphyrin-containing compound metabolism; heme O biosynthesis; heme O from protoheme: step 1/1. In terms of biological role, converts heme B (protoheme IX) to heme O by substitution of the vinyl group on carbon 2 of heme B porphyrin ring with a hydroxyethyl farnesyl side group. This Saccharolobus islandicus (strain Y.G.57.14 / Yellowstone #1) (Sulfolobus islandicus) protein is Protoheme IX farnesyltransferase.